A 252-amino-acid polypeptide reads, in one-letter code: Aspartate/glutamate leucyltransferase (252 aa).

It belongs to the R-transferase family. Bpt subfamily.

It localises to the cytoplasm. It catalyses the reaction N-terminal L-glutamyl-[protein] + L-leucyl-tRNA(Leu) = N-terminal L-leucyl-L-glutamyl-[protein] + tRNA(Leu) + H(+). It carries out the reaction N-terminal L-aspartyl-[protein] + L-leucyl-tRNA(Leu) = N-terminal L-leucyl-L-aspartyl-[protein] + tRNA(Leu) + H(+). Functions in the N-end rule pathway of protein degradation where it conjugates Leu from its aminoacyl-tRNA to the N-termini of proteins containing an N-terminal aspartate or glutamate. In Hyphomonas neptunium (strain ATCC 15444), this protein is Aspartate/glutamate leucyltransferase.